A 250-amino-acid chain; its full sequence is Triosephosphate isomerase (250 aa).

Substrate is bound at residue 9–11 (NWK). H96 serves as the catalytic Electrophile. E168 acts as the Proton acceptor in catalysis. Substrate is bound by residues G174, S216, and 237–238 (GG).

It belongs to the triosephosphate isomerase family. As to quaternary structure, homodimer.

It localises to the cytoplasm. It catalyses the reaction D-glyceraldehyde 3-phosphate = dihydroxyacetone phosphate. The protein operates within carbohydrate biosynthesis; gluconeogenesis. It functions in the pathway carbohydrate degradation; glycolysis; D-glyceraldehyde 3-phosphate from glycerone phosphate: step 1/1. In terms of biological role, involved in the gluconeogenesis. Catalyzes stereospecifically the conversion of dihydroxyacetone phosphate (DHAP) to D-glyceraldehyde-3-phosphate (G3P). The polypeptide is Triosephosphate isomerase (Leptospira interrogans serogroup Icterohaemorrhagiae serovar Lai (strain 56601)).